The sequence spans 350 residues: Eukaryotic translation initiation factor 3 subunit I (350 aa).

WD repeat units follow at residues 8 to 49 (GHER…GTLE), 51 to 89 (HQGV…CVYT), 91 to 135 (DSPS…ATLS), 149 to 188 (SEGS…LVTS), 198 to 240 (EKNV…KVYK), and 296 to 335 (GHFG…QDFL).

It belongs to the eIF-3 subunit I family. Component of the eukaryotic translation initiation factor 3 (eIF-3) complex.

Its subcellular location is the cytoplasm. Its function is as follows. Component of the eukaryotic translation initiation factor 3 (eIF-3) complex, which is involved in protein synthesis of a specialized repertoire of mRNAs and, together with other initiation factors, stimulates binding of mRNA and methionyl-tRNAi to the 40S ribosome. The eIF-3 complex specifically targets and initiates translation of a subset of mRNAs involved in cell proliferation. This is Eukaryotic translation initiation factor 3 subunit I from Candida albicans (strain SC5314 / ATCC MYA-2876) (Yeast).